We begin with the raw amino-acid sequence, 725 residues long: Glyoxysomal fatty acid beta-oxidation multifunctional protein MFP-a (725 aa).

This sequence in the N-terminal section; belongs to the enoyl-CoA hydratase/isomerase family. It in the central section; belongs to the 3-hydroxyacyl-CoA dehydrogenase family.

The protein resides in the glyoxysome. The catalysed reaction is a (3S)-3-hydroxyacyl-CoA = a (2E)-enoyl-CoA + H2O. The enzyme catalyses a 4-saturated-(3S)-3-hydroxyacyl-CoA = a (3E)-enoyl-CoA + H2O. It catalyses the reaction a (3Z)-enoyl-CoA = a 4-saturated (2E)-enoyl-CoA. It carries out the reaction a (3E)-enoyl-CoA = a 4-saturated (2E)-enoyl-CoA. The catalysed reaction is (3S)-3-hydroxybutanoyl-CoA = (3R)-3-hydroxybutanoyl-CoA. The enzyme catalyses a (3S)-3-hydroxyacyl-CoA + NAD(+) = a 3-oxoacyl-CoA + NADH + H(+). It functions in the pathway lipid metabolism; fatty acid beta-oxidation. This chain is Glyoxysomal fatty acid beta-oxidation multifunctional protein MFP-a, found in Cucumis sativus (Cucumber).